Consider the following 151-residue polypeptide: Spore coat polysaccharide biosynthesis protein SpsL (151 aa).

To dTDP-4-dehydrorhamnose reductase.

It participates in spore coat biogenesis; spore coat polysaccharide biosynthesis. The sequence is that of Spore coat polysaccharide biosynthesis protein SpsL (spsL) from Bacillus subtilis (strain 168).